The following is a 410-amino-acid chain: Peptidase T (410 aa).

H78 lines the Zn(2+) pocket. Residue D80 is part of the active site. D139 contributes to the Zn(2+) binding site. The active-site Proton acceptor is the E173. Residues E174, D196, and H378 each coordinate Zn(2+).

Belongs to the peptidase M20B family. Zn(2+) is required as a cofactor.

The protein resides in the cytoplasm. It carries out the reaction Release of the N-terminal residue from a tripeptide.. Functionally, cleaves the N-terminal amino acid of tripeptides. This is Peptidase T from Shewanella woodyi (strain ATCC 51908 / MS32).